The chain runs to 567 residues: Oxygen-dependent choline dehydrogenase (567 aa).

Residue D4–E33 participates in FAD binding. H473 (proton acceptor) is an active-site residue.

This sequence belongs to the GMC oxidoreductase family. FAD serves as cofactor.

It carries out the reaction choline + A = betaine aldehyde + AH2. It catalyses the reaction betaine aldehyde + NAD(+) + H2O = glycine betaine + NADH + 2 H(+). Its pathway is amine and polyamine biosynthesis; betaine biosynthesis via choline pathway; betaine aldehyde from choline (cytochrome c reductase route): step 1/1. Involved in the biosynthesis of the osmoprotectant glycine betaine. Catalyzes the oxidation of choline to betaine aldehyde and betaine aldehyde to glycine betaine at the same rate. In Yersinia pestis bv. Antiqua (strain Antiqua), this protein is Oxygen-dependent choline dehydrogenase.